Consider the following 412-residue polypeptide: L-cysteine:1D-myo-inositol 2-amino-2-deoxy-alpha-D-glucopyranoside ligase (412 aa).

Cysteine 43 is a Zn(2+) binding site. Residues 43-46 (CGIT), threonine 58, and 81-83 (NVT) contribute to the L-cysteinyl-5'-AMP site. The short motif at 45–55 (ITPYDATHLGH) is the 'HIGH' region element. The 'ERGGDP' region signature appears at 187-192 (ERGGDP). Tryptophan 227 contacts L-cysteinyl-5'-AMP. Cysteine 231 contacts Zn(2+). 249-251 (GSD) is an L-cysteinyl-5'-AMP binding site. Histidine 256 contributes to the Zn(2+) binding site. Isoleucine 283 contributes to the L-cysteinyl-5'-AMP binding site. Residues 289–293 (KMSKS) carry the 'KMSKS' region motif.

It belongs to the class-I aminoacyl-tRNA synthetase family. MshC subfamily. As to quaternary structure, monomer. The cofactor is Zn(2+).

It carries out the reaction 1D-myo-inositol 2-amino-2-deoxy-alpha-D-glucopyranoside + L-cysteine + ATP = 1D-myo-inositol 2-(L-cysteinylamino)-2-deoxy-alpha-D-glucopyranoside + AMP + diphosphate + H(+). Catalyzes the ATP-dependent condensation of GlcN-Ins and L-cysteine to form L-Cys-GlcN-Ins. This Saccharopolyspora erythraea (strain ATCC 11635 / DSM 40517 / JCM 4748 / NBRC 13426 / NCIMB 8594 / NRRL 2338) protein is L-cysteine:1D-myo-inositol 2-amino-2-deoxy-alpha-D-glucopyranoside ligase.